A 443-amino-acid polypeptide reads, in one-letter code: Serine/threonine-protein phosphatase 2A 55 kDa regulatory subunit B beta isoform (443 aa).

7 WD repeats span residues 22–61 (TEAD…KSQP), 87–128 (EIEE…KRPE), 171–209 (AHTY…RSFN), 220–260 (ELTE…LCDN), 279–317 (EIIS…KPLE), 334–375 (ENDC…DVTL), and 410–443 (DFSK…DKVN).

This sequence belongs to the phosphatase 2A regulatory subunit B family. As to quaternary structure, PP2A consists of a common heterodimeric core enzyme, composed of a 36 kDa catalytic subunit (subunit C) and a 65 kDa constant regulatory subunit (PR65 or subunit A), that associates with a variety of regulatory subunits.

The protein localises to the cytoplasm. Its subcellular location is the cytoskeleton. It localises to the membrane. In terms of biological role, the B regulatory subunit might modulate substrate selectivity and catalytic activity, and might also direct the localization of the catalytic enzyme to a particular subcellular compartment. In Carassius auratus (Goldfish), this protein is Serine/threonine-protein phosphatase 2A 55 kDa regulatory subunit B beta isoform (ppp2r2b).